The following is a 622-amino-acid chain: MSTDNKQSLPAITLAAIGVVYGDIGTSPLYTLRECLSGQFGFGVERDAVFGFLSLIFWLLIFVVSIKYLTFVMRADNAGEGGILTLMSLAGRNTSARTTSMLVIMGLIGGSFFYGEVVITPAISVMSAIEGLEIVAPQLDTWIVPLSIIVLTLLFMIQKHGTAMVGKLFAPIMLTWFLILAGLGLRSIIANPEVLHALNPMWAVHFFLEYKTVSFIALGAVVLSITGVEALYADMGHFGKFPIRLAWFTVVLPSLTLNYFGQGALLLKNPEAIKNPFFLLAPDWALIPLLIIAALATVIASQAVISGVFSLTRQAVRLGYLSPMRIIHTSEMESGQIYIPFVNWMLYVAVVIVIVSFEHSSNLAAAYGIAVTGTMVLTSILSTTVARQNWHWNKYFVALILIAFLCVDIPLFTANLDKLLSGGWLPLSLGTVMFIVMTTWKSERFRLLRRMHEHGNSLEAMIASLEKSPPVRVPGTAVYMSRAINVIPFALMHNLKHNKVLHERVILLTLRTEDAPYVHNVRRVQIEQLSPTFWRVVASYGWRETPNVEEVFHRCGLEGLSCRMMETSFFMSHESLILGKRPWYLRLRGKLYLLLQRNALRAPDQFEIPPNRVIELGTQVEI.

A run of 12 helical transmembrane segments spans residues 9 to 29 (LPAITLAAIGVVYGDIGTSPL), 49 to 69 (VFGFLSLIFWLLIFVVSIKYL), 103 to 123 (VIMGLIGGSFFYGEVVITPAI), 137 to 157 (PQLDTWIVPLSIIVLTLLFMI), 165 to 185 (VGKLFAPIMLTWFLILAGLGL), 213 to 233 (VSFIALGAVVLSITGVEALYA), 247 to 267 (WFTVVLPSLTLNYFGQGALLL), 276 to 296 (PFFLLAPDWALIPLLIIAALA), 337 to 357 (IYIPFVNWMLYVAVVIVIVSF), 363 to 383 (LAAAYGIAVTGTMVLTSILST), 396 to 416 (FVALILIAFLCVDIPLFTANL), and 419 to 439 (LLSGGWLPLSLGTVMFIVMTT).

The protein belongs to the HAK/KUP transporter (TC 2.A.72) family.

It is found in the cell inner membrane. It catalyses the reaction K(+)(in) + H(+)(in) = K(+)(out) + H(+)(out). Its function is as follows. Responsible for the low-affinity transport of potassium into the cell. Likely operates as a K(+):H(+) symporter. In Escherichia coli (strain K12 / MC4100 / BW2952), this protein is Low affinity potassium transport system protein Kup.